A 134-amino-acid chain; its full sequence is MKDWLDEIHWNADGLVPAIAQDHETGRVLMMAWMNREALALTASENRAIYWSRSRGKLWRKGEESGHVQKLHELRLDCDADVVILMVEQVGGIACHTGRESCFYRVFENGAWKTIDPVLKDPDAIYEHAGHHHE.

A Mg(2+)-binding site is contributed by D77. C78 serves as a coordination point for Zn(2+). Mg(2+) is bound by residues D79 and D81. Zn(2+) is bound by residues C95 and C102.

Belongs to the PRA-CH family. As to quaternary structure, homodimer. The cofactor is Mg(2+). Zn(2+) serves as cofactor.

The protein localises to the cytoplasm. It carries out the reaction 1-(5-phospho-beta-D-ribosyl)-5'-AMP + H2O = 1-(5-phospho-beta-D-ribosyl)-5-[(5-phospho-beta-D-ribosylamino)methylideneamino]imidazole-4-carboxamide. It functions in the pathway amino-acid biosynthesis; L-histidine biosynthesis; L-histidine from 5-phospho-alpha-D-ribose 1-diphosphate: step 3/9. Its function is as follows. Catalyzes the hydrolysis of the adenine ring of phosphoribosyl-AMP. The polypeptide is Phosphoribosyl-AMP cyclohydrolase (Pseudomonas aeruginosa (strain UCBPP-PA14)).